We begin with the raw amino-acid sequence, 352 residues long: Transcriptional regulatory protein AlgP (352 aa).

A disordered region spans residues 128 to 352; it reads KALESRKAKP…SNGAAPTSAS (225 aa). Residues 138–341 are compositionally biased toward low complexity; that stretch reads ATKPAAKAAA…SSAASATPAA (204 aa).

Functionally, the promoter for a critical alginate biosynthetic gene, AlgD, encoding GDP-mannose dehydrogenase, is activated only under conditions reminiscent of the cystic fibrosis lung (i.e. under high osmolarity), and at least two regulatory genes, AlgP and AlgQ, have been implicated in this activation process. This Pseudomonas aeruginosa (strain ATCC 15692 / DSM 22644 / CIP 104116 / JCM 14847 / LMG 12228 / 1C / PRS 101 / PAO1) protein is Transcriptional regulatory protein AlgP (algP).